Reading from the N-terminus, the 305-residue chain is Aspartate carbamoyltransferase catalytic subunit (305 aa).

2 residues coordinate carbamoyl phosphate: Arg54 and Thr55. Lys82 provides a ligand contact to L-aspartate. 3 residues coordinate carbamoyl phosphate: Arg104, His132, and Gln135. Arg165 and Arg218 together coordinate L-aspartate. Positions 259 and 260 each coordinate carbamoyl phosphate.

This sequence belongs to the aspartate/ornithine carbamoyltransferase superfamily. ATCase family. As to quaternary structure, heterododecamer (2C3:3R2) of six catalytic PyrB chains organized as two trimers (C3), and six regulatory PyrI chains organized as three dimers (R2).

It catalyses the reaction carbamoyl phosphate + L-aspartate = N-carbamoyl-L-aspartate + phosphate + H(+). It functions in the pathway pyrimidine metabolism; UMP biosynthesis via de novo pathway; (S)-dihydroorotate from bicarbonate: step 2/3. Its function is as follows. Catalyzes the condensation of carbamoyl phosphate and aspartate to form carbamoyl aspartate and inorganic phosphate, the committed step in the de novo pyrimidine nucleotide biosynthesis pathway. The protein is Aspartate carbamoyltransferase catalytic subunit of Caldicellulosiruptor bescii (strain ATCC BAA-1888 / DSM 6725 / KCTC 15123 / Z-1320) (Anaerocellum thermophilum).